Here is a 512-residue protein sequence, read N- to C-terminus: 2,3-bisphosphoglycerate-independent phosphoglycerate mutase (512 aa).

Residues Asp-12 and Ser-62 each coordinate Mn(2+). Ser-62 serves as the catalytic Phosphoserine intermediate. Residues His-123, 153–154 (RD), Arg-185, Arg-191, 260–263 (RPDR), and Lys-333 each bind substrate. Residues Asp-400, His-404, Asp-441, His-442, and His-460 each contribute to the Mn(2+) site.

This sequence belongs to the BPG-independent phosphoglycerate mutase family. In terms of assembly, monomer. Mn(2+) serves as cofactor.

It catalyses the reaction (2R)-2-phosphoglycerate = (2R)-3-phosphoglycerate. The protein operates within carbohydrate degradation; glycolysis; pyruvate from D-glyceraldehyde 3-phosphate: step 3/5. In terms of biological role, catalyzes the interconversion of 2-phosphoglycerate and 3-phosphoglycerate. The polypeptide is 2,3-bisphosphoglycerate-independent phosphoglycerate mutase (Clostridium perfringens (strain ATCC 13124 / DSM 756 / JCM 1290 / NCIMB 6125 / NCTC 8237 / Type A)).